A 2793-amino-acid chain; its full sequence is Iterative polyketide synthase afoE (2793 aa).

Residues 1 to 401 (MTRASASGSG…PEKPSFWLTP (401 aa)) are N-terminal acylcarrier protein transacylase domain (SAT). The Nucleophile; for transacylase activity role is filled by Cys-157. The active-site Proton donor/acceptor; for transacylase activity is His-279. The Ketosynthase family 3 (KS3) domain maps to 435–862 (SEPIAIVGMS…GSNASMIVTQ (428 aa)). Residues Cys-611, His-746, and His-785 each act as for beta-ketoacyl synthase activity in the active site. Residues 977 to 1265 (FGGQISRFVG…SSTITVMAGR (289 aa)) form a malonyl-CoA:ACP transacylase (MAT) region. The tract at residues 1384–1515 (WEFVGYQDDE…ATVEMRSSSD (132 aa)) is N-terminal hotdog fold. The PKS/mFAS DH domain maps to 1384–1698 (WEFVGYQDDE…YMRVAKASMS (315 aa)). Residues 1411-1696 (YVLSHVIAQT…VQYMRVAKAS (286 aa)) form a product template (PT) domain region. His-1415 serves as the catalytic Proton acceptor; for dehydratase activity. The C-terminal hotdog fold stretch occupies residues 1550–1698 (VEVLQGRNVY…YMRVAKASMS (149 aa)). Asp-1607 functions as the Proton donor; for dehydratase activity in the catalytic mechanism. Residues 1734–1776 (PEVRASSEPGAKVKASKTSKKEKKEKKPVTKAKSKSSKPSGWR) are disordered. A compositionally biased stretch (basic residues) spans 1747-1769 (KASKTSKKEKKEKKPVTKAKSKS). The Carrier domain occupies 1776–1850 (RDITEEVRNL…KFVQCVSNAL (75 aa)). Ser-1810 bears the O-(pantetheine 4'-phosphoryl)serine mark. The disordered stretch occupies residues 1853–1903 (PNAGPAEAEDDEDEEKSDNSSSESASESDDAGSESSDTGILTPTGEEEQPL). The span at 1859-1868 (EAEDDEDEEK) shows a compositional bias: acidic residues. The methyltransferase domain stretch occupies residues 2115 to 2294 (NLLAERIGRT…HVDWTDGNLP (180 aa)). Positions 2360–2379 (SRAEKESGKTQAPHAAPGRR) are disordered. An NADPH-binding domain region spans residues 2387–2630 (VTGATGSLGS…QWIPVDYCAA (244 aa)).

Pantetheine 4'-phosphate serves as cofactor.

It catalyses the reaction (3E,5E,7S)-5,7-dimethyl-2-oxonona-3,5-dienyl-[ACP] + 4 malonyl-CoA + AH2 + S-adenosyl-L-methionine + 3 H(+) = 6-[(3E,5E,7S)-5,7-dimethyl-2-oxonona-3,5-dienyl]-2,4-dihydroxy-3-methylbenzaldehyde + holo-[ACP] + A + S-adenosyl-L-homocysteine + 4 CO2 + 4 CoA + H2O. Its pathway is secondary metabolite biosynthesis. Iterative polyketide synthase; part of the gene cluster that mediates the biosynthesis of asperfuranone, a probable antitumor agent. The polyketide synthase afoG is responsible for producing the 3,5-dimethyloctadienone moiety from acetyl-CoA, three malonyl-CoA, and two S-adenosyl methionines (SAM). The 3,5-dimethyloctadienone moiety is then loaded onto the SAT domain of afoE and extended with four malonyl-CoA and one SAM, which leads to the formation of 2,4-dihydroxy-6-(5,7-dimethyl-2-oxo-trans-3-trans-5-nonadienyl)-3-methylbenzaldehyde (compound 2) after reductive release and aldol condensation. AfoD is the next enzyme in the biosynthesis sequence and hydroxylates the side chain at the benzylic position of compound 2. After benzylic hydroxylation, a furan ring is formed after five-member ring hemiacetal formation and water elimination. AfoF and afoC are proposed to oxidize the R-diketone proton and to reduce the unconjugated carbonyl group, respectively, to generate asperfuranone. Since no intermediates could be isolated from afoF and afoC deletants, the sequence of these two enzymes is not fully understood. Moreover, since afoC deletant still produces a small amount of asperfuranone, other endogenous oxidoreductases might catalyze the same reaction with much less efficiency. This chain is Iterative polyketide synthase afoE, found in Emericella nidulans (strain FGSC A4 / ATCC 38163 / CBS 112.46 / NRRL 194 / M139) (Aspergillus nidulans).